A 488-amino-acid chain; its full sequence is Glutamyl-tRNA(Gln) amidotransferase subunit A (488 aa).

Catalysis depends on charge relay system residues Lys77 and Ser152. The active-site Acyl-ester intermediate is Ser176.

It belongs to the amidase family. GatA subfamily. In terms of assembly, heterotrimer of A, B and C subunits.

The enzyme catalyses L-glutamyl-tRNA(Gln) + L-glutamine + ATP + H2O = L-glutaminyl-tRNA(Gln) + L-glutamate + ADP + phosphate + H(+). Functionally, allows the formation of correctly charged Gln-tRNA(Gln) through the transamidation of misacylated Glu-tRNA(Gln) in organisms which lack glutaminyl-tRNA synthetase. The reaction takes place in the presence of glutamine and ATP through an activated gamma-phospho-Glu-tRNA(Gln). In Streptococcus pyogenes serotype M6 (strain ATCC BAA-946 / MGAS10394), this protein is Glutamyl-tRNA(Gln) amidotransferase subunit A.